We begin with the raw amino-acid sequence, 135 residues long: MIRSSVMGPTMFLVVLLLIASHQTSAWSLDGLARIEKLLSTSSSASAASPTRGQALNLKKRAILDQSCKGIFDRELFKKLDRVCDDCYNLYRKPYVAIDCREGCYQNLVFRQCIQDLQLMDQLDEYANAVQIVGK.

Residues 1-26 form the signal peptide; that stretch reads MIRSSVMGPTMFLVVLLLIASHQTSA. 3 disulfides stabilise this stretch: Cys-68/Cys-104, Cys-84/Cys-100, and Cys-87/Cys-113. Valine amide is present on Val-133.

It belongs to the arthropod CHH/MIH/GIH/VIH hormone family. Produced by the medulla terminalis X-organ in the eyestalks and transported to the sinus gland where they are stored and released.

Its subcellular location is the secreted. Its function is as follows. Hormone found in the sinus gland of isopods and decapods which controls the blood sugar level. Has a secretagogue action over the amylase released from the midgut gland. May act as a stress hormone and may be involved in the control of molting and reproduction. This Macrobrachium lanchesteri (Freshwater prawn) protein is Crustacean hyperglycemic hormones (CHH).